Here is a 256-residue protein sequence, read N- to C-terminus: Proteasome subunit beta type-5 (256 aa).

Residues 1–55 (CNMALADIVRLPPASEAPFAPLGAPRDLSGPPSKLAVRPWGGADLPGPGLQLLHG) constitute a propeptide, removed in mature form. T56 acts as the Nucleophile in catalysis.

This sequence belongs to the peptidase T1B family. In terms of assembly, the 26S proteasome consists of a 20S proteasome core and two 19S regulatory subunits. The 20S proteasome core is a barrel-shaped complex made of 28 subunits that are arranged in four stacked rings. The two outer rings are each formed by seven alpha subunits, and the two inner rings are formed by seven beta subunits. The proteolytic activity is exerted by three beta-subunits PSMB5, PSMB6 and PSMB7. Directly interacts with POMP. Interacts with ABCB1 and TAP1.

It is found in the cytoplasm. Its subcellular location is the nucleus. The catalysed reaction is Cleavage of peptide bonds with very broad specificity.. Component of the 20S core proteasome complex involved in the proteolytic degradation of most intracellular proteins. This complex plays numerous essential roles within the cell by associating with different regulatory particles. Associated with two 19S regulatory particles, forms the 26S proteasome and thus participates in the ATP-dependent degradation of ubiquitinated proteins. The 26S proteasome plays a key role in the maintenance of protein homeostasis by removing misfolded or damaged proteins that could impair cellular functions, and by removing proteins whose functions are no longer required. Associated with the PA200 or PA28, the 20S proteasome mediates ubiquitin-independent protein degradation. This type of proteolysis is required in several pathways including spermatogenesis (20S-PA200 complex) or generation of a subset of MHC class I-presented antigenic peptides (20S-PA28 complex). Within the 20S core complex, PSMB5 displays a chymotrypsin-like activity. This is Proteasome subunit beta type-5 (PSMB5) from Gallus gallus (Chicken).